Here is a 481-residue protein sequence, read N- to C-terminus: Argininosuccinate synthase (481 aa).

ATP-binding positions include 17–25 and Ala43; that span reads AFSGGLDTS. Position 99 (Tyr99) interacts with L-citrulline. 2 residues coordinate ATP: Gly129 and Thr131. Residues Thr131, Asn135, and Asp136 each coordinate L-aspartate. Position 135 (Asn135) interacts with L-citrulline. Position 136 (Asp136) interacts with ATP. L-citrulline is bound by residues Arg139 and Ser192. Asp194 is a binding site for ATP. L-citrulline is bound by residues Thr201, Glu203, and Glu280.

This sequence belongs to the argininosuccinate synthase family. Type 2 subfamily. Homotetramer.

The protein localises to the cytoplasm. The enzyme catalyses L-citrulline + L-aspartate + ATP = 2-(N(omega)-L-arginino)succinate + AMP + diphosphate + H(+). It participates in amino-acid biosynthesis; L-arginine biosynthesis; L-arginine from L-ornithine and carbamoyl phosphate: step 2/3. In Streptomyces coelicolor (strain ATCC BAA-471 / A3(2) / M145), this protein is Argininosuccinate synthase (argG).